Consider the following 285-residue polypeptide: ATP synthase gamma chain (285 aa).

This sequence belongs to the ATPase gamma chain family. F-type ATPases have 2 components, CF(1) - the catalytic core - and CF(0) - the membrane proton channel. CF(1) has five subunits: alpha(3), beta(3), gamma(1), delta(1), epsilon(1). CF(0) has three main subunits: a, b and c.

It is found in the cell membrane. Its function is as follows. Produces ATP from ADP in the presence of a proton gradient across the membrane. The gamma chain is believed to be important in regulating ATPase activity and the flow of protons through the CF(0) complex. This Dehalococcoides mccartyi (strain ATCC BAA-2100 / JCM 16839 / KCTC 5957 / BAV1) protein is ATP synthase gamma chain.